An 807-amino-acid chain; its full sequence is Leucine--tRNA ligase (807 aa).

The short motif at 40–51 (PYPSGSGLHVGH) is the 'HIGH' region element. Residues 576-580 (KMSKS) carry the 'KMSKS' region motif. Lys579 lines the ATP pocket.

This sequence belongs to the class-I aminoacyl-tRNA synthetase family.

The protein localises to the cytoplasm. The enzyme catalyses tRNA(Leu) + L-leucine + ATP = L-leucyl-tRNA(Leu) + AMP + diphosphate. In Chlorobaculum parvum (strain DSM 263 / NCIMB 8327) (Chlorobium vibrioforme subsp. thiosulfatophilum), this protein is Leucine--tRNA ligase.